Consider the following 127-residue polypeptide: KP4 killer toxin (127 aa).

A signal peptide spans 1–22; sequence MQIINVVYSFLFAAAMLPVVHS. 5 disulfides stabilise this stretch: cysteine 27/cysteine 100, cysteine 33/cysteine 103, cysteine 49/cysteine 89, cysteine 57/cysteine 82, and cysteine 66/cysteine 127.

As to quaternary structure, monomer.

The protein resides in the secreted. Functionally, this protein is lethal to sensitive cells of the same or related species. It specifically inhibits voltage-gated calcium channels. It inhibits cell growth and division by blocking calcium import. In Mycosarcoma maydis (Corn smut fungus), this protein is KP4 killer toxin (M2A).